The primary structure comprises 504 residues: Transcriptional coactivator YAP1 (504 aa).

2 stretches are compositionally biased toward pro residues: residues 1-12 (MDPGQQPPPQPA) and 20-36 (PSQP…PGQP). Residues 1–59 (MDPGQQPPPQPAPQGQGQPPSQPPQGQGPPSGPGQPAPAATQAAPQAPPAGHQIVHVRG) form a disordered region. Low complexity predominate over residues 37–51 (APAATQAAPQAPPAG). Serine 61 carries the phosphoserine; by LATS1 and LATS2 modification. Threonine 63 carries the phosphothreonine modification. Residues 86–100 (MRLRKLPDSFFKPPE) are a coiled coil. At lysine 90 the chain carries N6-lactoyllysine. Residues 91-114 (LPDSFFKPPEPKSHSRQASTDAGT) are disordered. Serine 105 is subject to Phosphoserine. Phosphoserine; by LATS1 and LATS2 is present on serine 109. Threonine 110 bears the Phosphothreonine mark. Position 119 is a phosphothreonine; by MAPK8 and MAPK9 (threonine 119). Position 127 is a phosphoserine; by LATS1 and LATS2 (serine 127). Residues serine 128 and serine 131 each carry the phosphoserine modification. The interval 133–158 (QLGAVSPGTLTPTGVVSGPAATPTAQ) is disordered. Residue serine 138 is modified to Phosphoserine; by MAPK8 and MAPK9. Position 154 is a phosphothreonine; by MAPK8 and MAPK9 (threonine 154). Serine 164 bears the Phosphoserine; by LATS1 and LATS2 mark. 2 WW domains span residues 171–204 (VPLP…DPRK) and 230–263 (GPLP…DPRL). Phosphoserine occurs at positions 274 and 289. 2 disordered regions span residues 275 to 309 (QSAP…MRLQ) and 355 to 407 (LEQD…MSSY). A transactivation domain region spans residues 291-504 (QGGVMGGSNS…LDKESFLTWL (214 aa)). Positions 298-359 (SNSNQQQQMR…SQLPTLEQDG (62 aa)) form a coiled coil. A compositionally biased stretch (polar residues) spans 355-391 (LEQDGGTQNPVSSPGMSQELRTMTTNSSDPFLNSGTY). A Phosphoserine; by MAPK8 and MAPK9 modification is found at serine 367. 4 positions are modified to phosphoserine: serine 371, serine 381, serine 382, and serine 388. Serine 397 bears the Phosphoserine; by LATS1 and LATS2 mark. Phosphoserine; by CK1 occurs at positions 400 and 403. A Phosphotyrosine; by ABL1 modification is found at tyrosine 407. Threonine 412 bears the Phosphothreonine; by MAPK8 and MAPK9 mark.

The protein belongs to the YAP1 family. As to quaternary structure, part of a complex when phosphorylated that contains DSG3, PKP1, YAP1 and YWHAG; the complex is required for localization of DSG3 and YAP1 to the cell membrane in keratinocytes. Binds to the SH3 domain of the YES kinase. Binds to WBP1 and WBP2. Binds, in vitro, through the WW1 domain, to neural isoforms of ENAH that contain the PPSY motif. The phosphorylated form interacts with YWHAB. Interacts (via WW domains) with LATS1 (via PPxY motif 2). Interacts with LATS2. Interacts with TEAD1, TEAD2, TEAD3 and TEAD4. Interacts with TP73. Interacts with RUNX1. Interacts with HCK. Interacts (via WW domains) with PTPN14 (via PPxY motif 2); this interaction leads to the cytoplasmic sequestration of YAP1 and inhibits its transcriptional coactivator activity. Interacts (when phosphorylated at Ser-127) with SMAD2, SMAD3 and WWTR1. Interacts with PRRG2 (via cytoplasmic domain). Interacts (via WW domains) with PRRG4 (via cytoplasmic domain). Interacts (phosphorylated) with CLDN18; the interaction sequesters YAP1 away from the nucleus and thereby restricts transcription of YAP1 target genes. Interacts with SMAD1. Interacts with AMOTL2, the interaction is required for ubiquitination of AMOTL2 and localization of YAP1 to tight junctions. Interacts with AMOT isoform 1; the interaction facilitates translocation of YAP1 to the cytoplasm and tight junctions. In terms of assembly, interacts (via WW domain 1) with isoform 3 of ERBB4 (via PPxY motif 2). Post-translationally, phosphorylated by LATS1 and LATS2; leading to cytoplasmic translocation and inactivation. Phosphorylated by ABL1; leading to YAP1 stabilization, enhanced interaction with TP73 and recruitment onto proapoptotic genes; in response to DNA damage. Phosphorylation at Ser-400 and Ser-403 by CK1 is triggered by previous phosphorylation at Ser-397 by LATS proteins and leads to YAP1 ubiquitination by SCF(beta-TRCP) E3 ubiquitin ligase and subsequent degradation. Phosphorylated at Thr-119, Ser-138, Thr-154, Ser-367 and Thr-412 by MAPK8/JNK1 and MAPK9/JNK2, which is required for the regulation of apoptosis by YAP1. Phosphorylated in the nucleus by PRP4K; phosphorylation leads to nuclear exclusion. In terms of processing, lactylation by AARS1 promotes nuclear localization and stabilization of YAP1, leading to increased Hippo signaling pathway. Delactylated by SIRT1. Ubiquitinated by SCF(beta-TRCP) E3 ubiquitin ligase. As to expression, increased expression seen in some liver and prostate cancers. Isoforms lacking the transactivation domain found in striatal neurons of patients with Huntington disease (at protein level).

The protein localises to the cytoplasm. The protein resides in the nucleus. It localises to the cell junction. Its subcellular location is the tight junction. It is found in the cell membrane. Functionally, transcriptional regulator with dual roles as a coactivator and corepressor. Critical downstream regulatory target in the Hippo signaling pathway, crucial for organ size control and tumor suppression by restricting proliferation and promoting apoptosis. The Hippo signaling pathway core involves a kinase cascade featuring STK3/MST2 and STK4/MST1, along with its regulatory partner SAV1, which phosphorylates and activates LATS1/2 in complex with their regulatory protein, MOB1. This activation leads to the phosphorylation and inactivation of the YAP1 oncoprotein and WWTR1/TAZ. Phosphorylation of YAP1 by LATS1/2 prevents its nuclear translocation, thereby regulating the expression of its target genes. The transcriptional regulation of gene expression requires TEAD transcription factors and modulates cell growth, anchorage-independent growth, and induction of epithelial-mesenchymal transition (EMT). Plays a key role in tissue tension and 3D tissue shape by regulating the cortical actomyosin network, acting via ARHGAP18, a Rho GTPase activating protein that suppresses F-actin polymerization. It also suppresses ciliogenesis by acting as a transcriptional corepressor of TEAD4 target genes AURKA and PLK1. In conjunction with WWTR1, regulates TGFB1-dependent SMAD2 and SMAD3 nuclear accumulation. Synergizes with WBP2 to enhance PGR activity. In terms of biological role, activates the C-terminal fragment (CTF) of ERBB4 (isoform 3). This is Transcriptional coactivator YAP1 from Homo sapiens (Human).